Reading from the N-terminus, the 554-residue chain is Thermosome subunit beta (554 aa).

A disordered region spans residues 532–554; sequence GKKSGSEPSGKKEKDKEEKSSED. The segment covering 540–554 has biased composition (basic and acidic residues); that stretch reads SGKKEKDKEEKSSED.

Belongs to the TCP-1 chaperonin family. Forms a Heterooligomeric complex of two stacked eight-membered rings.

Functionally, molecular chaperone; binds unfolded polypeptides in vitro, and has a weak ATPase activity. The sequence is that of Thermosome subunit beta (thsB) from Saccharolobus solfataricus (strain ATCC 35092 / DSM 1617 / JCM 11322 / P2) (Sulfolobus solfataricus).